A 79-amino-acid chain; its full sequence is MPKSDIHPTWYPDAKVICNGEVVMTTGATQPEIHVDVWSGNHPFFTGTQKILDTEGRVDRFMKKYGMGSTKGKDDDASS.

The protein belongs to the bacterial ribosomal protein bL31 family. Type A subfamily. In terms of assembly, part of the 50S ribosomal subunit.

Functionally, binds the 23S rRNA. This Synechococcus sp. (strain CC9902) protein is Large ribosomal subunit protein bL31.